The chain runs to 88 residues: Small ribosomal subunit protein uS19 (88 aa).

The protein belongs to the universal ribosomal protein uS19 family.

Protein S19 forms a complex with S13 that binds strongly to the 16S ribosomal RNA. This is Small ribosomal subunit protein uS19 (rpsS) from Chlamydia muridarum (strain MoPn / Nigg).